Consider the following 524-residue polypeptide: Alanine aminotransferase 2 (524 aa).

An N6-(pyridoxal phosphate)lysine modification is found at Lys342.

This sequence belongs to the class-I pyridoxal-phosphate-dependent aminotransferase family. Alanine aminotransferase subfamily. In terms of assembly, homodimer. Pyridoxal 5'-phosphate serves as cofactor.

It catalyses the reaction L-alanine + 2-oxoglutarate = pyruvate + L-glutamate. Its pathway is amino-acid degradation; L-alanine degradation via transaminase pathway; pyruvate from L-alanine: step 1/1. Catalyzes the reversible transamination between alanine and 2-oxoglutarate to form pyruvate and glutamate. The protein is Alanine aminotransferase 2 (gpt2) of Xenopus tropicalis (Western clawed frog).